The sequence spans 317 residues: Beta-ketoacyl-[acyl-carrier-protein] synthase III (317 aa).

Active-site residues include Cys112 and His244. The ACP-binding stretch occupies residues 245-249 (QANLR). Asn274 is a catalytic residue.

This sequence belongs to the thiolase-like superfamily. FabH family. As to quaternary structure, homodimer.

It localises to the cytoplasm. It carries out the reaction malonyl-[ACP] + acetyl-CoA + H(+) = 3-oxobutanoyl-[ACP] + CO2 + CoA. Its pathway is lipid metabolism; fatty acid biosynthesis. Functionally, catalyzes the condensation reaction of fatty acid synthesis by the addition to an acyl acceptor of two carbons from malonyl-ACP. Catalyzes the first condensation reaction which initiates fatty acid synthesis and may therefore play a role in governing the total rate of fatty acid production. Possesses both acetoacetyl-ACP synthase and acetyl transacylase activities. Its substrate specificity determines the biosynthesis of branched-chain and/or straight-chain of fatty acids. This Escherichia coli O9:H4 (strain HS) protein is Beta-ketoacyl-[acyl-carrier-protein] synthase III.